The sequence spans 338 residues: tRNA N6-adenosine threonylcarbamoyltransferase (338 aa).

Residues histidine 111 and histidine 115 each coordinate Fe cation. Residues 134–138, aspartate 167, glycine 180, aspartate 184, and asparagine 272 contribute to the substrate site; that span reads VVSGG. Residue aspartate 300 coordinates Fe cation.

The protein belongs to the KAE1 / TsaD family. The cofactor is Fe(2+).

It is found in the cytoplasm. The enzyme catalyses L-threonylcarbamoyladenylate + adenosine(37) in tRNA = N(6)-L-threonylcarbamoyladenosine(37) in tRNA + AMP + H(+). In terms of biological role, required for the formation of a threonylcarbamoyl group on adenosine at position 37 (t(6)A37) in tRNAs that read codons beginning with adenine. Is involved in the transfer of the threonylcarbamoyl moiety of threonylcarbamoyl-AMP (TC-AMP) to the N6 group of A37, together with TsaE and TsaB. TsaD likely plays a direct catalytic role in this reaction. This Syntrophus aciditrophicus (strain SB) protein is tRNA N6-adenosine threonylcarbamoyltransferase.